The primary structure comprises 874 residues: Coatomer subunit gamma-1 (874 aa).

Over residues 1–11 (MLKKFDKKDEE) the composition is skewed to basic and acidic residues. The interval 1–21 (MLKKFDKKDEESGGGSNPFQH) is disordered. HEAT repeat units follow at residues 64–101 (TEAT…IAED), 283–320 (KELA…KHPS), 322–355 (VTAC…GSES), and 356–392 (SIDR…KYPR). At Thr-594 the chain carries Phosphothreonine. Positions 609–874 (RQEIFQEQLA…PVDIILASVG (266 aa)) are interaction with ZNF289/ARFGAP2.

Belongs to the COPG family. Oligomeric complex that consists of at least the alpha, beta, beta', gamma, delta, epsilon and zeta subunits. Interacts with ZNF289/ARFGAP2 through its C-terminal appendage domain. Interacts with EGFR upon EGF treatment; interaction is essential for regulation of EGF-dependent nuclear transport of EGFR by retrograde trafficking from the Golgi to the ER. The coatomer interacts with KDEL receptors; the interaction is important for retrograde trafficking of KDEL-bearing proteins from the Golgi to the endoplasmic reticulum. Interacts with COPB1. Interacts with TMED10 (via C-terminus). Interacts with TMED2, TMED3, TMED7 and TMED9.

The protein resides in the cytoplasm. The protein localises to the golgi apparatus membrane. Its subcellular location is the cytoplasmic vesicle. It localises to the COPI-coated vesicle membrane. Functionally, the coatomer is a cytosolic protein complex that binds to dilysine motifs and reversibly associates with Golgi non-clathrin-coated vesicles, which further mediate biosynthetic protein transport from the ER, via the Golgi up to the trans Golgi network. Coatomer complex is required for budding from Golgi membranes, and is essential for the retrograde Golgi-to-ER transport of dilysine-tagged proteins. In mammals, the coatomer can only be recruited by membranes associated to ADP-ribosylation factors (ARFs), which are small GTP-binding proteins; the complex also influences the Golgi structural integrity, as well as the processing, activity, and endocytic recycling of LDL receptors. Required for limiting lipid storage in lipid droplets. Involved in lipid homeostasis by regulating the presence of perilipin family members PLIN2 and PLIN3 at the lipid droplet surface and promoting the association of adipocyte triglyceride lipase (PNPLA2) with the lipid droplet surface to mediate lipolysis. This chain is Coatomer subunit gamma-1 (COPG1), found in Homo sapiens (Human).